Consider the following 364-residue polypeptide: Histidinol-phosphate aminotransferase (364 aa).

K226 is subject to N6-(pyridoxal phosphate)lysine.

The protein belongs to the class-II pyridoxal-phosphate-dependent aminotransferase family. Histidinol-phosphate aminotransferase subfamily. As to quaternary structure, homodimer. It depends on pyridoxal 5'-phosphate as a cofactor.

The catalysed reaction is L-histidinol phosphate + 2-oxoglutarate = 3-(imidazol-4-yl)-2-oxopropyl phosphate + L-glutamate. Its pathway is amino-acid biosynthesis; L-histidine biosynthesis; L-histidine from 5-phospho-alpha-D-ribose 1-diphosphate: step 7/9. The protein is Histidinol-phosphate aminotransferase of Campylobacter jejuni subsp. jejuni serotype O:6 (strain 81116 / NCTC 11828).